The following is a 77-amino-acid chain: Acyl carrier protein (77 aa).

The Carrier domain occupies alanine 2–glutamine 77. Serine 37 carries the post-translational modification O-(pantetheine 4'-phosphoryl)serine.

Belongs to the acyl carrier protein (ACP) family. Post-translationally, 4'-phosphopantetheine is transferred from CoA to a specific serine of apo-ACP by AcpS. This modification is essential for activity because fatty acids are bound in thioester linkage to the sulfhydryl of the prosthetic group.

It localises to the cytoplasm. It functions in the pathway lipid metabolism; fatty acid biosynthesis. Functionally, carrier of the growing fatty acid chain in fatty acid biosynthesis. This chain is Acyl carrier protein (acpA), found in Bacillus subtilis (strain 168).